Here is a 428-residue protein sequence, read N- to C-terminus: RUN domain-containing protein 3A (428 aa).

The RUN domain occupies 52 to 182; it reads DDSSEEFINF…IDFSFCLKGE (131 aa). The stretch at 237 to 314 forms a coiled coil; it reads ESWRNKCRKM…ELQEQLTSLI (78 aa). The tract at residues 349–375 is disordered; it reads HRGSFPSPEPHISLTTGSQRTERKQNG.

The protein belongs to the RUNDC3 family.

This is RUN domain-containing protein 3A (rundc3a) from Danio rerio (Zebrafish).